Here is a 150-residue protein sequence, read N- to C-terminus: Profilin (150 aa).

It belongs to the profilin family. In terms of assembly, occurs in many kinds of cells as a complex with monomeric actin in a 1:1 ratio.

It is found in the cytoplasm. The protein resides in the cytoskeleton. Its function is as follows. Binds to actin and affects the structure of the cytoskeleton. At high concentrations, profilin prevents the polymerization of actin, whereas it enhances it at low concentrations. By binding to PIP2, it inhibits the formation of IP3 and DG. This chain is Profilin, found in Trypanosoma brucei brucei.